Consider the following 260-residue polypeptide: UPF0246 protein BTH_I1090 (260 aa).

This sequence belongs to the UPF0246 family.

This chain is UPF0246 protein BTH_I1090, found in Burkholderia thailandensis (strain ATCC 700388 / DSM 13276 / CCUG 48851 / CIP 106301 / E264).